The primary structure comprises 354 residues: F-box/kelch-repeat protein At1g80440 (354 aa).

Residues 2 to 49 (ELIPNLPDDVARECLLRSSYQQFPVIASVCRAWNREVSLSQFLHQRKA) enclose the F-box domain. Kelch repeat units follow at residues 63-110 (RVDP…CRLV), 115-163 (DLIV…ASDS), 166-213 (TVLV…FHAG), and 215-263 (FHVI…PPTC).

The sequence is that of F-box/kelch-repeat protein At1g80440 from Arabidopsis thaliana (Mouse-ear cress).